A 376-amino-acid chain; its full sequence is UDP-N-acetylglucosamine 2-epimerase (376 aa).

Residues arginine 10, lysine 15, aspartate 95, glutamate 117, histidine 213, glutamine 271, phenylalanine 276, 290–292 (SGG), glutamate 296, and arginine 313 each bind substrate.

This sequence belongs to the UDP-N-acetylglucosamine 2-epimerase family. Homodimer.

The protein localises to the cytoplasm. The enzyme catalyses UDP-N-acetyl-alpha-D-glucosamine = UDP-N-acetyl-alpha-D-mannosamine. It functions in the pathway bacterial outer membrane biogenesis; enterobacterial common antigen biosynthesis. Its function is as follows. Catalyzes the reversible epimerization at C-2 of UDP-N-acetylglucosamine (UDP-GlcNAc) and thereby provides bacteria with UDP-N-acetylmannosamine (UDP-ManNAc), the activated donor of ManNAc residues. This Escherichia coli O157:H7 protein is UDP-N-acetylglucosamine 2-epimerase.